We begin with the raw amino-acid sequence, 491 residues long: Cytochrome P450 2H2 (491 aa).

Cys-436 lines the heme pocket.

The protein belongs to the cytochrome P450 family. Requires heme as cofactor.

Its subcellular location is the endoplasmic reticulum membrane. The protein localises to the microsome membrane. It catalyses the reaction an organic molecule + reduced [NADPH--hemoprotein reductase] + O2 = an alcohol + oxidized [NADPH--hemoprotein reductase] + H2O + H(+). In terms of biological role, cytochromes P450 are a group of heme-thiolate monooxygenases. In liver microsomes, this enzyme is involved in an NADPH-dependent electron transport pathway. It oxidizes a variety of structurally unrelated compounds, including steroids, fatty acids, and xenobiotics. The sequence is that of Cytochrome P450 2H2 (CYP2H2) from Gallus gallus (Chicken).